Consider the following 201-residue polypeptide: uncharacterized protein (201 aa).

The 108-residue stretch at 15–122 folds into the Bro-N domain; it reads KNQIQFSTFN…EVLPQIRKTG (108 aa).

This is an uncharacterized protein from Haemophilus influenzae (strain ATCC 51907 / DSM 11121 / KW20 / Rd).